Consider the following 209-residue polypeptide: FMN-dependent NADH:quinone oxidoreductase 2 (209 aa).

17–19 (SAS) contributes to the FMN binding site.

Belongs to the azoreductase type 1 family. In terms of assembly, homodimer. It depends on FMN as a cofactor.

It catalyses the reaction 2 a quinone + NADH + H(+) = 2 a 1,4-benzosemiquinone + NAD(+). The enzyme catalyses N,N-dimethyl-1,4-phenylenediamine + anthranilate + 2 NAD(+) = 2-(4-dimethylaminophenyl)diazenylbenzoate + 2 NADH + 2 H(+). In terms of biological role, quinone reductase that provides resistance to thiol-specific stress caused by electrophilic quinones. Functionally, also exhibits azoreductase activity. Catalyzes the reductive cleavage of the azo bond in aromatic azo compounds to the corresponding amines. The chain is FMN-dependent NADH:quinone oxidoreductase 2 from Lactiplantibacillus plantarum (strain ATCC BAA-793 / NCIMB 8826 / WCFS1) (Lactobacillus plantarum).